The following is a 555-amino-acid chain: Protein NRT1/ PTR FAMILY 2.1 (555 aa).

Transmembrane regions (helical) follow at residues 32–52 (TLLG…VFLI), 68–88 (IVNG…DSFF), 91–111 (IPVI…LTLI), 127–147 (ILCQ…LALV), 175–195 (FFNW…TAIV), 205–225 (LGFG…ISGK), 324–344 (VLPL…QASM), 369–389 (VIVL…IYPI), 401–421 (LQQV…SAIV), 437–457 (VLWL…HYMA), 476–496 (SVTS…INLI), and 517–537 (WVLV…SWYF).

This sequence belongs to the major facilitator superfamily. Proton-dependent oligopeptide transporter (POT/PTR) (TC 2.A.17) family. In terms of tissue distribution, expressed in roots.

The protein resides in the membrane. Its function is as follows. Transporter involved in a passive nitrate efflux. The chain is Protein NRT1/ PTR FAMILY 2.1 (NPF2.1) from Arabidopsis thaliana (Mouse-ear cress).